We begin with the raw amino-acid sequence, 145 residues long: uncharacterized protein (145 aa).

A helical membrane pass occupies residues 63–83 (FLCLPLFLSFLVANLILWLSF).

Its subcellular location is the mitochondrion membrane. This is an uncharacterized protein from Arabidopsis thaliana (Mouse-ear cress).